The chain runs to 889 residues: Alanine--tRNA ligase (889 aa).

Histidine 566, histidine 570, cysteine 683, and histidine 687 together coordinate Zn(2+).

Belongs to the class-II aminoacyl-tRNA synthetase family. It depends on Zn(2+) as a cofactor.

The protein resides in the cytoplasm. It catalyses the reaction tRNA(Ala) + L-alanine + ATP = L-alanyl-tRNA(Ala) + AMP + diphosphate. In terms of biological role, catalyzes the attachment of alanine to tRNA(Ala) in a two-step reaction: alanine is first activated by ATP to form Ala-AMP and then transferred to the acceptor end of tRNA(Ala). Also edits incorrectly charged Ser-tRNA(Ala) and Gly-tRNA(Ala) via its editing domain. In Herpetosiphon aurantiacus (strain ATCC 23779 / DSM 785 / 114-95), this protein is Alanine--tRNA ligase.